Here is a 962-residue protein sequence, read N- to C-terminus: Glycine dehydrogenase (decarboxylating) (962 aa).

Residue lysine 709 is modified to N6-(pyridoxal phosphate)lysine.

Belongs to the GcvP family. The glycine cleavage system is composed of four proteins: P, T, L and H. Pyridoxal 5'-phosphate serves as cofactor.

The catalysed reaction is N(6)-[(R)-lipoyl]-L-lysyl-[glycine-cleavage complex H protein] + glycine + H(+) = N(6)-[(R)-S(8)-aminomethyldihydrolipoyl]-L-lysyl-[glycine-cleavage complex H protein] + CO2. The glycine cleavage system catalyzes the degradation of glycine. The P protein binds the alpha-amino group of glycine through its pyridoxal phosphate cofactor; CO(2) is released and the remaining methylamine moiety is then transferred to the lipoamide cofactor of the H protein. The polypeptide is Glycine dehydrogenase (decarboxylating) (Shewanella pealeana (strain ATCC 700345 / ANG-SQ1)).